A 329-amino-acid chain; its full sequence is Malate dehydrogenase (329 aa).

12–18 is an NAD(+) binding site; sequence GAAGQIG. The substrate site is built by arginine 95 and arginine 101. Residues asparagine 108, glutamine 115, and 132 to 134 each bind NAD(+); that span reads VGN. Positions 134 and 165 each coordinate substrate. The Proton acceptor role is filled by histidine 190.

This sequence belongs to the LDH/MDH superfamily. MDH type 2 family.

The enzyme catalyses (S)-malate + NAD(+) = oxaloacetate + NADH + H(+). Catalyzes the reversible oxidation of malate to oxaloacetate. The protein is Malate dehydrogenase of Polynucleobacter asymbioticus (strain DSM 18221 / CIP 109841 / QLW-P1DMWA-1) (Polynucleobacter necessarius subsp. asymbioticus).